The chain runs to 178 residues: Translation initiation factor IF-3 (178 aa).

The protein belongs to the IF-3 family. Monomer.

Its subcellular location is the cytoplasm. Functionally, IF-3 binds to the 30S ribosomal subunit and shifts the equilibrium between 70S ribosomes and their 50S and 30S subunits in favor of the free subunits, thus enhancing the availability of 30S subunits on which protein synthesis initiation begins. The protein is Translation initiation factor IF-3 of Nautilia profundicola (strain ATCC BAA-1463 / DSM 18972 / AmH).